A 521-amino-acid polypeptide reads, in one-letter code: GMP synthase [glutamine-hydrolyzing] (521 aa).

Residues 5–203 (KILILDFGSQ…VHEICGCGRD (199 aa)) enclose the Glutamine amidotransferase type-1 domain. C82 acts as the Nucleophile in catalysis. Active-site residues include H177 and E179. In terms of domain architecture, GMPS ATP-PPase spans 204–396 (WNMPDYVNEA…LGLPHEMVYR (193 aa)). 231–237 (SGGVDSS) provides a ligand contact to ATP.

As to quaternary structure, homodimer.

The enzyme catalyses XMP + L-glutamine + ATP + H2O = GMP + L-glutamate + AMP + diphosphate + 2 H(+). It functions in the pathway purine metabolism; GMP biosynthesis; GMP from XMP (L-Gln route): step 1/1. Catalyzes the synthesis of GMP from XMP. The chain is GMP synthase [glutamine-hydrolyzing] from Aromatoleum aromaticum (strain DSM 19018 / LMG 30748 / EbN1) (Azoarcus sp. (strain EbN1)).